We begin with the raw amino-acid sequence, 377 residues long: 3-dehydroquinate synthase (377 aa).

Residues 113–117 (GVIGD), 137–138 (TT), Lys-150, and Lys-159 each bind NAD(+). 3 residues coordinate Zn(2+): Glu-192, His-254, and His-273.

It belongs to the sugar phosphate cyclases superfamily. Dehydroquinate synthase family. It depends on Co(2+) as a cofactor. Zn(2+) serves as cofactor. The cofactor is NAD(+).

It is found in the cytoplasm. The enzyme catalyses 7-phospho-2-dehydro-3-deoxy-D-arabino-heptonate = 3-dehydroquinate + phosphate. It functions in the pathway metabolic intermediate biosynthesis; chorismate biosynthesis; chorismate from D-erythrose 4-phosphate and phosphoenolpyruvate: step 2/7. In terms of biological role, catalyzes the conversion of 3-deoxy-D-arabino-heptulosonate 7-phosphate (DAHP) to dehydroquinate (DHQ). The protein is 3-dehydroquinate synthase of Bartonella tribocorum (strain CIP 105476 / IBS 506).